The following is a 156-amino-acid chain: Ribosome maturation factor RimP (156 aa).

Belongs to the RimP family.

The protein localises to the cytoplasm. Functionally, required for maturation of 30S ribosomal subunits. This Bacillus thuringiensis (strain Al Hakam) protein is Ribosome maturation factor RimP.